Consider the following 48-residue polypeptide: Osteocalcin (48 aa).

One can recognise a Gla domain in the interval Ala1–Gly44. Ca(2+) contacts are provided by Glu14, Glu18, Glu21, and Glu27. Residues Glu14, Glu18, and Glu21 each carry the 4-carboxyglutamate modification. The cysteines at positions 20 and 26 are disulfide-linked.

This sequence belongs to the osteocalcin/matrix Gla protein family. Post-translationally, gamma-carboxyglutamate residues are formed by vitamin K dependent carboxylation by GGCX. These residues are essential for the binding of calcium.

The protein resides in the secreted. It localises to the extracellular space. Its subcellular location is the extracellular matrix. Its function is as follows. The carboxylated form is one of the main organic components of the bone matrix, which constitutes 1-2% of the total bone protein. The carboxylated form binds strongly to apatite and calcium. This chain is Osteocalcin (bglap), found in Cyprinus carpio (Common carp).